The primary structure comprises 185 residues: Ribosome-recycling factor (185 aa).

This sequence belongs to the RRF family.

The protein resides in the cytoplasm. Its function is as follows. Responsible for the release of ribosomes from messenger RNA at the termination of protein biosynthesis. May increase the efficiency of translation by recycling ribosomes from one round of translation to another. The chain is Ribosome-recycling factor from Clostridium botulinum (strain Alaska E43 / Type E3).